Reading from the N-terminus, the 245-residue chain is Pathogenesis-related thaumatin-like protein 3.6 (245 aa).

An N-terminal signal peptide occupies residues 1–19; that stretch reads GSIPFWIALIASFSVFLQG. 8 disulfides stabilise this stretch: cysteine 33–cysteine 226, cysteine 74–cysteine 84, cysteine 89–cysteine 95, cysteine 142–cysteine 215, cysteine 148–cysteine 198, cysteine 156–cysteine 166, cysteine 170–cysteine 179, and cysteine 180–cysteine 185. N-linked (GlcNAc...) asparagine glycosylation is present at asparagine 90. Asparagine 186 carries N-linked (GlcNAc...) asparagine glycosylation.

It belongs to the thaumatin family. Mostly expressed in strobili, and, to a lower extent, in roots of seedlings and saplings.

Functionally, may be involved in disease resistance. The protein is Pathogenesis-related thaumatin-like protein 3.6 of Cryptomeria japonica (Japanese cedar).